A 30-amino-acid polypeptide reads, in one-letter code: Gamma-II crystallin (30 aa).

The region spanning Gly-1–Ser-30 is the Beta/gamma crystallin 'Greek key' domain.

This sequence belongs to the beta/gamma-crystallin family. Monomer.

Functionally, crystallins are the dominant structural components of the vertebrate eye lens. The chain is Gamma-II crystallin from Rhizoprionodon acutus (Milk shark).